The sequence spans 25 residues: Neuromedin-U-25 (25 aa).

Asparagine 25 is subject to Asparagine amide.

The protein belongs to the NmU family.

It is found in the secreted. Stimulates uterine smooth muscle contraction and causes selective vasoconstriction. This Rana temporaria (European common frog) protein is Neuromedin-U-25.